Here is a 182-residue protein sequence, read N- to C-terminus: Probable pyruvoyl-dependent arginine decarboxylase (182 aa).

Ser-43 carries the pyruvic acid (Ser) modification.

It belongs to the PdaD family. It depends on pyruvate as a cofactor.

It carries out the reaction L-arginine + H(+) = agmatine + CO2. The polypeptide is Probable pyruvoyl-dependent arginine decarboxylase (Chloroherpeton thalassium (strain ATCC 35110 / GB-78)).